Here is a 326-residue protein sequence, read N- to C-terminus: Probable cell division protein WhiA (326 aa).

The H-T-H motif DNA-binding region spans 275 to 308 (SLEELGALADPPLTKDAIAGRIRRLLALADKRAR).

This sequence belongs to the WhiA family.

Its function is as follows. Involved in cell division and chromosome segregation. The chain is Probable cell division protein WhiA from Salinispora arenicola (strain CNS-205).